The chain runs to 158 residues: NKG2-F type II integral membrane protein (158 aa).

A compositionally biased stretch (polar residues) spans 1–12; the sequence is MNKQRGTYSEVS. The segment at 1–25 is disordered; sequence MNKQRGTYSEVSLAQDPKRQQRKLK. The Cytoplasmic segment spans residues 1–74; it reads MNKQRGTYSE…LPPPEKLTAE (74 aa). A helical; Signal-anchor for type II membrane protein transmembrane segment spans residues 75–95; it reads VLGIICIVLMATVLKTIVLIP. The Extracellular segment spans residues 96–158; the sequence is CIGVLEQNNF…VLRRTLICFL (63 aa).

In terms of assembly, can form disulfide-bonded heterodimer with CD94. Natural killer cells.

Its subcellular location is the membrane. In terms of biological role, may play a role as a receptor for the recognition of MHC class I HLA-E molecules by NK cells. This Homo sapiens (Human) protein is NKG2-F type II integral membrane protein (KLRC4).